The sequence spans 299 residues: MLFDQIARNKRKTWLLLLVFFLLLGLVGYGVGNLWLGSGFGGLILALVIGFIYVVTMIFQSTNVVMAMNGAREVDEQTAPNLYHVVEDMAMVAQIPMPRVFIVDDPSMNAFATGSSPKNAAVAATTGLLAVMNREELEGVIGHEVSHIRNYDIRISTIAVALASAITMLAGMARNMMLWGGGRRRNDDDRDGSSGLEIVFLILSLIAIILAPLAATLVQLAISRQREFLADASSVELTRNPQGMINALLKLDNSAPMQHHVDDASAALFINDPKKESGLQKLFYTHPPISERVERLKQM.

Helical transmembrane passes span 14–34 (WLLL…VGNL) and 39–59 (GFGG…TMIF). Histidine 143 provides a ligand contact to Zn(2+). Residue glutamate 144 is part of the active site. Residue histidine 147 participates in Zn(2+) binding. 2 helical membrane-spanning segments follow: residues 153–173 (IRIS…AGMA) and 198–218 (IVFL…ATLV). Glutamate 227 is a Zn(2+) binding site.

It belongs to the peptidase M48B family. Zn(2+) serves as cofactor.

It is found in the cell membrane. The sequence is that of Protease HtpX homolog from Streptococcus thermophilus (strain ATCC BAA-250 / LMG 18311).